Here is a 92-residue protein sequence, read N- to C-terminus: YcgL domain-containing protein Shewana3_2381 (92 aa).

Positions 1-85 (MLCAVYKSSR…PQVNLLAEHR (85 aa)) constitute a YcgL domain.

This chain is YcgL domain-containing protein Shewana3_2381, found in Shewanella sp. (strain ANA-3).